We begin with the raw amino-acid sequence, 473 residues long: MSRLVVVSNRIAPPDNKGGAGGLAVGVLGALKAAGGLWFGWSGETGNEDEPLKKVTKGNITWASFNLSEQDYEDYYCQFSNAVLWPAFHYRLDLVQFQRPAWEGYMRVNALLADKLLPLIKENDIIWVHDYHLLPFASELRKRGVNNRIGFFLHIPFPTPEIFNALPPHDELLEQLCDFDLLGFQTENDRLAFLDSLSSQTRVTTRSGKHHIAWGKDFQTEVYPIGIEPDEIALQAAGPLPPKLVQLKAELKNVKNIFSVERLDYSKGLPERFLAYEALLENYPQHRGKIRYTQIAPTSRGEVQAYQDIRHQLETEAGRINGRYGQLGWTPLYYLNQHFDRKLLMKIFRYSDVGLVTPLRDGMNLVAKEFVAAQDPANPGVLVLSQFAGAANELTSALIVNPYDRDDVAAALNRALTMPLAERISRHAEMLDVIVKNDINRWQERFIHDLKEVTPRSAERRQQNNVATFPKLA.

R10 is a D-glucose 6-phosphate binding site. 21–22 (GG) is a binding site for UDP-alpha-D-glucose. Positions 76 and 130 each coordinate D-glucose 6-phosphate. Residues R262 and K267 each coordinate UDP-alpha-D-glucose. Residue R300 participates in D-glucose 6-phosphate binding. UDP-alpha-D-glucose-binding positions include F339 and 365–369 (LVAKE).

It belongs to the glycosyltransferase 20 family. As to quaternary structure, homotetramer.

It catalyses the reaction D-glucose 6-phosphate + UDP-alpha-D-glucose = alpha,alpha-trehalose 6-phosphate + UDP + H(+). The protein operates within glycan biosynthesis; trehalose biosynthesis. Functionally, probably involved in the osmoprotection via the biosynthesis of trehalose. Catalyzes the transfer of glucose from UDP-alpha-D-glucose (UDP-Glc) to D-glucose 6-phosphate (Glc-6-P) to form trehalose-6-phosphate. Acts with retention of the anomeric configuration of the UDP-sugar donor. The protein is Trehalose-6-phosphate synthase (otsA) of Salmonella arizonae (strain ATCC BAA-731 / CDC346-86 / RSK2980).